Here is a 353-residue protein sequence, read N- to C-terminus: L-tryptophan dehydrogenase (353 aa).

Arg-44 is an NAD(+) binding site. The active-site Proton donor/acceptor is the Lys-80. NAD(+)-binding positions include Asp-114, Thr-146, 176-181 (GLGNVG), Lys-204, and 255-257 (AAN).

The protein belongs to the Glu/Leu/Phe/Val dehydrogenases family. Homodimer.

It catalyses the reaction L-tryptophan + NAD(+) + H2O = indole-3-pyruvate + NH4(+) + NADH + H(+). With respect to regulation, highly susceptible to inhibition by indole-3-pyruvate. Activity is not affected by the presence of metal ions, EDTA, KCl or DMSO. In terms of biological role, catalyzes the reversible oxidative deamination of L-tryptophan to indole-3-pyruvate in the presence of NAD(+). Shows weak activity with L-phenylalanine, but cannot use other L-amino acids and D-Trp. Cannot use NADP(+) for oxidative deamination of L-Trp, and shows only weak activity with NADPH for reductive amination of indole-3-pyruvate. Involved in the biosynthesis of scytonemin, a cyanobacterial radiation-absorbing pigment. The polypeptide is L-tryptophan dehydrogenase (Nostoc punctiforme).